The sequence spans 75 residues: MLVLSRKNNESIMLGKDIEIKILGIEDGKVKLGIEAPKDVEIYRKEIYLEIQEENKAASEQKQDWSQLKGLFTKK.

This sequence belongs to the CsrA/RsmA family. Homodimer; the beta-strands of each monomer intercalate to form a hydrophobic core, while the alpha-helices form wings that extend away from the core.

The protein localises to the cytoplasm. In terms of biological role, a translational regulator that binds mRNA to regulate translation initiation and/or mRNA stability. Usually binds in the 5'-UTR at or near the Shine-Dalgarno sequence preventing ribosome-binding, thus repressing translation. Its main target seems to be the major flagellin gene, while its function is anatagonized by FliW. This Alkaliphilus metalliredigens (strain QYMF) protein is Translational regulator CsrA.